Here is a 440-residue protein sequence, read N- to C-terminus: MARLVLGLVSCTFFLAVSGLYSSSDDVIELTPSNFNREVIQSDGLWLVEFYAPWCGHCQRLTPEWKKAATALKDVVKVGAVNADKHQSLGGQYGVQGFPTIKIFGANKNKPEDYQGGRTGEAIVDAALSALRQLVKDRLGGRSGGYSSGKQGRGDSSSKKDVVELTDDTFDKNVLDSEDVWMVEFYAPWCGHCKNLEPEWAAAATEVKEQTKGKVKLAAVDATVNQVLASRYGIKGFPTIKIFQKGESPVDYDGGRTRSDIVSRALDLFSDNAPPPELLEIINEDIAKKTCEEHQLCVVAVLPHILDTGAAGRNSYLEVLLKLADKYKKKMWGWLWTEAGAQYELENALGIGGFGYPAMAAINARKMKFALLKGSFSEQGINEFLRELSFGRGSTAPVGGGSFPTITPREPWDGKDGELPVEDDIDLSDVELDDLEKDEL.

Residues 1–19 (MARLVLGLVSCTFFLAVSG) form the signal peptide. 2 consecutive Thioredoxin domains span residues 20–133 (LYSS…ALRQ) and 151–287 (QGRG…EDIA). C55 and C58 are disulfide-bonded. Phosphoserine occurs at positions 129, 156, and 158. The tract at residues 139-161 (LGGRSGGYSSGKQGRGDSSSKKD) is disordered. Basic and acidic residues predominate over residues 152–161 (GRGDSSSKKD). C190 and C193 form a disulfide bridge. Residues 399 to 440 (GGGSFPTITPREPWDGKDGELPVEDDIDLSDVELDDLEKDEL) are disordered. Residues 419–440 (LPVEDDIDLSDVELDDLEKDEL) show a composition bias toward acidic residues. Phosphoserine is present on S428. Residues 437–440 (KDEL) carry the Prevents secretion from ER motif.

Belongs to the protein disulfide isomerase family. As to quaternary structure, part of a large chaperone multiprotein complex comprising DNAJB11, HSP90B1, HSPA5, HYOU, PDIA2, PDIA4, PDIA6, PPIB, SDF2L1, UGGT1 and very small amounts of ERP29, but not, or at very low levels, CALR nor CANX. Interacts with MICA on the surface of tumor cells, leading to MICA disulfide bond reduction which is required for its release from tumor cells. Interacts with ITGB3 following platelet stimulation. Interacts with ERN1; the interaction is direct. Interacts with EIF2AK3.

The protein localises to the endoplasmic reticulum lumen. It is found in the cell membrane. It localises to the melanosome. The catalysed reaction is Catalyzes the rearrangement of -S-S- bonds in proteins.. May function as a chaperone that inhibits aggregation of misfolded proteins. Negatively regulates the unfolded protein response (UPR) through binding to UPR sensors such as ERN1, which in turn inactivates ERN1 signaling. May also regulate the UPR via the EIF2AK3 UPR sensor. Plays a role in platelet aggregation and activation by agonists such as convulxin, collagen and thrombin. This Mus musculus (Mouse) protein is Protein disulfide-isomerase A6 (Pdia6).